We begin with the raw amino-acid sequence, 428 residues long: Glutamyl-tRNA reductase (428 aa).

Substrate-binding positions include 50 to 53, Ser-110, 115 to 117, and Gln-121; these read TCNR and ETQ. The Nucleophile role is filled by Cys-51. 190 to 195 lines the NADP(+) pocket; the sequence is GAGEMG.

It belongs to the glutamyl-tRNA reductase family. As to quaternary structure, homodimer.

The catalysed reaction is (S)-4-amino-5-oxopentanoate + tRNA(Glu) + NADP(+) = L-glutamyl-tRNA(Glu) + NADPH + H(+). It participates in porphyrin-containing compound metabolism; protoporphyrin-IX biosynthesis; 5-aminolevulinate from L-glutamyl-tRNA(Glu): step 1/2. Its function is as follows. Catalyzes the NADPH-dependent reduction of glutamyl-tRNA(Glu) to glutamate 1-semialdehyde (GSA). This Campylobacter curvus (strain 525.92) protein is Glutamyl-tRNA reductase.